Reading from the N-terminus, the 400-residue chain is Queuine tRNA-ribosyltransferase catalytic subunit 1 (400 aa).

Asp-103 functions as the Proton acceptor in the catalytic mechanism. Queuine-binding positions include 103–107, Asp-157, Gln-200, and Gly-227; that span reads DSGGF. Residues 258-264 are RNA binding; it reads GVGYAVD. Asp-277 (nucleophile) is an active-site residue. The interval 282-286 is RNA binding; important for wobble base 34 recognition; the sequence is TRTAR. Zn(2+) is bound by residues Cys-315, Cys-317, Cys-320, and His-345.

This sequence belongs to the queuine tRNA-ribosyltransferase family. In terms of assembly, heterodimer of a catalytic subunit qtrt1 and an accessory subunit qtrt2. Zn(2+) serves as cofactor.

It is found in the cytoplasm. It localises to the mitochondrion outer membrane. It catalyses the reaction guanosine(34) in tRNA + queuine = queuosine(34) in tRNA + guanine. Functionally, catalytic subunit of the queuine tRNA-ribosyltransferase (TGT) that catalyzes the base-exchange of a guanine (G) residue with queuine (Q) at position 34 (anticodon wobble position) in tRNAs with GU(N) anticodons (tRNA-Asp, -Asn, -His and -Tyr), resulting in the hypermodified nucleoside queuosine (7-(((4,5-cis-dihydroxy-2-cyclopenten-1-yl)amino)methyl)-7-deazaguanosine). Catalysis occurs through a double-displacement mechanism. The nucleophile active site attacks the C1' of nucleotide 34 to detach the guanine base from the RNA, forming a covalent enzyme-RNA intermediate. The proton acceptor active site deprotonates the incoming queuine, allowing a nucleophilic attack on the C1' of the ribose to form the product. The chain is Queuine tRNA-ribosyltransferase catalytic subunit 1 from Danio rerio (Zebrafish).